Consider the following 249-residue polypeptide: tRNA pseudouridine synthase A (249 aa).

The active-site Nucleophile is the Asp52. Residue Tyr111 coordinates substrate.

It belongs to the tRNA pseudouridine synthase TruA family. In terms of assembly, homodimer.

The catalysed reaction is uridine(38/39/40) in tRNA = pseudouridine(38/39/40) in tRNA. In terms of biological role, formation of pseudouridine at positions 38, 39 and 40 in the anticodon stem and loop of transfer RNAs. This is tRNA pseudouridine synthase A from Caulobacter sp. (strain K31).